Here is a 161-residue protein sequence, read N- to C-terminus: Anaerobic nitrite reductase Glb1-2 (161 aa).

A Globin domain is found at 9–158 (AFTEEQEALV…LASAIIAEMK (150 aa)). The short motif at 42–46 (EIAPP) is the Homodimerization element. The heme b site is built by S52, K66, H70, K100, T104, and H105. The Homodimerization motif lies at 112 to 124 (PEHFEVTKQALLD).

This sequence belongs to the plant globin family. In terms of assembly, homodimer. The cofactor is heme b. In terms of tissue distribution, mainly expressed in root nodules and leaves, and, to a lower extent, in roots, stems, flowers and fruits. Accumulates in mature root nodules.

It catalyses the reaction Fe(III)-heme b-[protein] + nitric oxide + H2O = Fe(II)-heme b-[protein] + nitrite + 2 H(+). Its function is as follows. Phytoglobin that reduces nitrite to nitric oxide (NO) under anoxic conditions (e.g. during flooding or in waterlogged soil) and upon root nodulation. Required for general plant development and during nodulation, especially for the onset of symbiosis. Monitors nitric oxide (NO) levels during early phase of the nitrogen-fixing symbiosis and buffers oxygen in functioning nodules. Necessary for the production of pods. May not function as an oxygen storage or transport protein. Has an unusually high affinity for O(2) through a hexacoordinate heme iron because of a very low dissociation constant. This is Anaerobic nitrite reductase Glb1-2 from Lotus japonicus (Lotus corniculatus var. japonicus).